Reading from the N-terminus, the 312-residue chain is Ribosomal RNA small subunit methyltransferase H (312 aa).

Residues 32–34, D52, F79, D100, and Q107 contribute to the S-adenosyl-L-methionine site; that span reads AGH.

This sequence belongs to the methyltransferase superfamily. RsmH family.

Its subcellular location is the cytoplasm. It catalyses the reaction cytidine(1402) in 16S rRNA + S-adenosyl-L-methionine = N(4)-methylcytidine(1402) in 16S rRNA + S-adenosyl-L-homocysteine + H(+). Specifically methylates the N4 position of cytidine in position 1402 (C1402) of 16S rRNA. This is Ribosomal RNA small subunit methyltransferase H from Listeria monocytogenes serotype 4b (strain F2365).